The following is a 740-amino-acid chain: ATP-dependent RNA helicase DDX1 (740 aa).

The segment at 1 to 295 (MAAFSEMGVM…APKALIVEPS (295 aa)) is necessary for interaction with HNRNPK. The interaction with dsRNA stretch occupies residues 1 to 448 (MAAFSEMGVM…DTVHHVVVPV (448 aa)). The segment at 1–525 (MAAFSEMGVM…KIDCDNLEQY (525 aa)) is necessary for interaction with RELA. The Helicase ATP-binding domain occupies 2–428 (AAFSEMGVMP…SEKIMHFPTW (427 aa)). 46–53 (AETGSGKT) serves as a coordination point for ATP. The 178-residue stretch at 70 to 247 (DQQEGKKGKA…LKFNFGEEEF (178 aa)) folds into the B30.2/SPRY domain. K239 and K268 each carry N6-acetyllysine. At K281 the chain carries N6-acetyllysine; alternate. A Glycyl lysine isopeptide (Lys-Gly) (interchain with G-Cter in SUMO2); alternate cross-link involves residue K281. The DEAD box signature appears at 370–373 (DEAD). A Phosphoserine modification is found at S481. The Helicase C-terminal domain occupies 493–681 (KGEYAVRAIK…QVEPDIKVPV (189 aa)). Positions 525–740 (YFMQQGGGPD…YLPNQLFRTF (216 aa)) are necessary for interaction with HNRNPK.

Belongs to the DEAD box helicase family. DDX1 subfamily. Found in a multi-helicase-TICAM1 complex at least composed of DHX36, DDX1, DDX21 and TICAM1; this complex exists in resting cells with or without poly(I:C) RNA ligand stimulation. Interacts with DHX36. Interacts (via B30.2/SPRY domain) with DDX21 (via N-terminus); this interaction serves as bridges to TICAM1. Interacts with FAM98A (via N- and C-terminus). Interacts with PHF5A (via C-terminus). Interacts with MBNL1. Interacts with CSTF2. Interacts with HNRNPK. Interacts with ATM. Interacts with RELA (via C-terminus). Component of the tRNA-splicing ligase complex. Interacts with PQBP1. Interacts with ERCC6. Phosphorylated by ATM kinase; phosphorylation is increased in response to ionizing radiation (IR).

It localises to the nucleus. The protein resides in the cytoplasm. It is found in the cytoplasmic granule. Its subcellular location is the cytosol. The protein localises to the mitochondrion. The catalysed reaction is ATP + H2O = ADP + phosphate + H(+). Functionally, acts as an ATP-dependent RNA helicase, able to unwind both RNA-RNA and RNA-DNA duplexes. Possesses 5' single-stranded RNA overhang nuclease activity. Possesses ATPase activity on various RNA, but not DNA polynucleotides. May play a role in RNA clearance at DNA double-strand breaks (DSBs), thereby facilitating the template-guided repair of transcriptionally active regions of the genome. Together with RELA, acts as a coactivator to enhance NF-kappa-B-mediated transcriptional activation. Acts as a positive transcriptional regulator of cyclin CCND2 expression. Binds to the cyclin CCND2 promoter region. Associates with chromatin at the NF-kappa-B promoter region via association with RELA. Binds to poly(A) RNA. May be involved in 3'-end cleavage and polyadenylation of pre-mRNAs. Component of the tRNA-splicing ligase complex required to facilitate the enzymatic turnover of catalytic subunit RTCB: together with archease (ZBTB8OS), acts by facilitating the guanylylation of RTCB, a key intermediate step in tRNA ligation. Component of a multi-helicase-TICAM1 complex that acts as a cytoplasmic sensor of viral double-stranded RNA (dsRNA) and plays a role in the activation of a cascade of antiviral responses including the induction of pro-inflammatory cytokines via the adapter molecule TICAM1. Specifically binds (via helicase ATP-binding domain) on both short and long poly(I:C) dsRNA. This Rattus norvegicus (Rat) protein is ATP-dependent RNA helicase DDX1 (Ddx1).